A 295-amino-acid polypeptide reads, in one-letter code: Phosphatidylserine decarboxylase proenzyme (295 aa).

Active-site charge relay system; for autoendoproteolytic cleavage activity residues include Asp113, His169, and Ser256. Ser256 functions as the Schiff-base intermediate with substrate; via pyruvic acid; for decarboxylase activity in the catalytic mechanism. Pyruvic acid (Ser); by autocatalysis is present on Ser256.

It belongs to the phosphatidylserine decarboxylase family. PSD-B subfamily. Prokaryotic type II sub-subfamily. In terms of assembly, heterodimer of a large membrane-associated beta subunit and a small pyruvoyl-containing alpha subunit. Pyruvate serves as cofactor. Is synthesized initially as an inactive proenzyme. Formation of the active enzyme involves a self-maturation process in which the active site pyruvoyl group is generated from an internal serine residue via an autocatalytic post-translational modification. Two non-identical subunits are generated from the proenzyme in this reaction, and the pyruvate is formed at the N-terminus of the alpha chain, which is derived from the carboxyl end of the proenzyme. The autoendoproteolytic cleavage occurs by a canonical serine protease mechanism, in which the side chain hydroxyl group of the serine supplies its oxygen atom to form the C-terminus of the beta chain, while the remainder of the serine residue undergoes an oxidative deamination to produce ammonia and the pyruvoyl prosthetic group on the alpha chain. During this reaction, the Ser that is part of the protease active site of the proenzyme becomes the pyruvoyl prosthetic group, which constitutes an essential element of the active site of the mature decarboxylase.

The protein localises to the cell membrane. The catalysed reaction is a 1,2-diacyl-sn-glycero-3-phospho-L-serine + H(+) = a 1,2-diacyl-sn-glycero-3-phosphoethanolamine + CO2. It functions in the pathway phospholipid metabolism; phosphatidylethanolamine biosynthesis; phosphatidylethanolamine from CDP-diacylglycerol: step 2/2. Its function is as follows. Catalyzes the formation of phosphatidylethanolamine (PtdEtn) from phosphatidylserine (PtdSer). The sequence is that of Phosphatidylserine decarboxylase proenzyme from Clostridium botulinum (strain 657 / Type Ba4).